Reading from the N-terminus, the 240-residue chain is Large ribosomal subunit protein bL25 (240 aa).

The disordered stretch occupies residues 1–23 (MATVKELKATARPKAGKGAARAE). The segment covering 10–19 (TARPKAGKGA) has biased composition (low complexity).

Belongs to the bacterial ribosomal protein bL25 family. CTC subfamily. As to quaternary structure, part of the 50S ribosomal subunit; part of the 5S rRNA/L5/L18/L25 subcomplex. Contacts the 5S rRNA. Binds to the 5S rRNA independently of L5 and L18.

Functionally, this is one of the proteins that binds to the 5S RNA in the ribosome where it forms part of the central protuberance. The protein is Large ribosomal subunit protein bL25 of Afipia carboxidovorans (strain ATCC 49405 / DSM 1227 / KCTC 32145 / OM5) (Oligotropha carboxidovorans).